We begin with the raw amino-acid sequence, 260 residues long: Putative ABC transporter ATP-binding protein PH0132 (260 aa).

The ABC transporter domain maps to 2–234; it reads IEFRDVWFWY…DLEGFGLKEP (233 aa). 34-41 lines the ATP pocket; it reads GPNGSGKT.

Belongs to the ABC transporter superfamily.

It is found in the cell membrane. Functionally, probably part of an ABC transporter complex. Responsible for energy coupling to the transport system. The protein is Putative ABC transporter ATP-binding protein PH0132 of Pyrococcus horikoshii (strain ATCC 700860 / DSM 12428 / JCM 9974 / NBRC 100139 / OT-3).